The primary structure comprises 867 residues: Ataxin-7 (867 aa).

The segment covering Met-1–Arg-15 has biased composition (basic and acidic residues). The tract at residues Met-1 to Ala-59 is disordered. Positions Ala-16–His-39 are enriched in low complexity. Residue Lys-222 is modified to N6-acetyllysine. Lys-243 participates in a covalent cross-link: Glycyl lysine isopeptide (Lys-Gly) (interchain with G-Cter in SUMO); alternate. Lys-243 participates in a covalent cross-link: Glycyl lysine isopeptide (Lys-Gly) (interchain with G-Cter in SUMO2); alternate. The SCA7 domain maps to Lys-320 to His-387. Residues Ala-379 to His-400 show a composition bias toward basic and acidic residues. 3 disordered regions span residues Ala-379–Val-483, His-600–Val-711, and Thr-845–Pro-867. Composition is skewed to pro residues over residues Pro-426–Cys-437 and Ile-447–Ala-462. Residues Glu-472–Glu-481 show a composition bias toward acidic residues. The span at Ser-619–Ser-647 shows a compositional bias: low complexity. The segment covering Lys-649–Ile-659 has biased composition (basic residues). Polar residues predominate over residues Ser-665–Ala-674. Residues Ser-689–Val-711 are compositionally biased toward low complexity. Over residues Gly-846–Leu-860 the composition is skewed to polar residues.

The protein belongs to the ataxin-7 family. In terms of assembly, component of the SAGA transcription coactivator-HAT complex, at least composed of SUPT3H, GCN5L2, TAF5L, TAF6L, SUPT7L, TADA3L, TAD1L, TAF10, TAF12, TRRAP, TAF9 and ATXN7. The STAGA core complex is associated with a subcomplex required for histone deubiquitination composed of ATXN7L3, ENY2 and USP22. Interacts with SORBS1, PSMC1 and CRX. Interacts with TRRAP, GCN5L2 and TAF10. Interacts with alpha tubulin. In terms of processing, proteolytically cleaved by caspase-7 (CASP7). Sumoylation has no effect on subcellular location or interaction with components of the STAGA complex. In terms of tissue distribution, widely expressed in adult tissues, with the highest expression in heart, brain, liver and kidney.

It is found in the nucleus. Its subcellular location is the nucleolus. It localises to the nucleus matrix. The protein resides in the cytoplasm. The protein localises to the cytoskeleton. Its function is as follows. Acts as a component of the SAGA (aka STAGA) transcription coactivator-HAT complex. Mediates the interaction of SAGA complex with the CRX and is involved in CRX-dependent gene activation. Probably involved in tethering the deubiquitination module within the SAGA complex. Necessary for microtubule cytoskeleton stabilization. Involved in neurodegeneration. This is Ataxin-7 (Atxn7) from Mus musculus (Mouse).